The following is a 320-amino-acid chain: Peptidase 1 (320 aa).

The first 18 residues, 1 to 18 (MKIVLAIASLLALSAVYA), serve as a signal peptide directing secretion. A propeptide spans 19 to 98 (RPSSIKTFEE…LKTQFDLNAE (80 aa)) (activation peptide). 3 cysteine pairs are disulfide-bonded: C102/C215, C129/C169, and C163/C201. Residue C132 is part of the active site. The N-linked (GlcNAc...) asparagine glycan is linked to N150. Catalysis depends on residues H268 and N288.

It belongs to the peptidase C1 family. In terms of processing, N-glycosylated. N-glycanase treatment does not completely remove carbohydrates, suggesting that the protein contains additional glycosylation sites.

Its subcellular location is the secreted. It carries out the reaction Broad endopeptidase specificity.. Functionally, thiol protease, with a preference for substrates with a large hydrophobic side chain in the P2 position, or with basic residues. The chain is Peptidase 1 (DERP1) from Dermatophagoides pteronyssinus (European house dust mite).